The following is a 304-amino-acid chain: Recombination-associated protein RdgC (304 aa).

This sequence belongs to the RdgC family.

The protein localises to the cytoplasm. The protein resides in the nucleoid. Functionally, may be involved in recombination. The sequence is that of Recombination-associated protein RdgC from Shewanella sp. (strain ANA-3).